Consider the following 371-residue polypeptide: Cell division cycle-associated protein 7 (371 aa).

Disordered stretches follow at residues 60–110 (TRSQ…EDES) and 140–188 (PGSF…SRIL). Residues 94 to 103 (PSENSVTDSN) show a composition bias toward polar residues. Residue Ser142 is modified to Phosphoserine. The tract at residues 146–170 (RHPLPGSDSQSRRPRRRTFPGVASR) is interaction with MYC. The Nuclear localization signal signature appears at 160–176 (RRRTFPGVASRRNPERR). Thr163 carries the phosphothreonine modification. Residue Ser190 is modified to Phosphoserine. Lys204 participates in a covalent cross-link: Glycyl lysine isopeptide (Lys-Gly) (interchain with G-Cter in SUMO2). Residues 247-371 (EEELENVCSN…SLKQEFEMQA (125 aa)) form a mediates transcriptional activity region.

As to quaternary structure, interacts with MYC (via C-terminus), YWHAE and YWHAZ. In terms of processing, phosphorylation at Thr-163 promotes interaction with YWHAE and YWHAZ, dissociation from MYC and sequestration in the cytoplasm. In vitro, phosphorylated at Thr-163 by AKT. In terms of tissue distribution, ubiquitous with higher level in thymus and small intestine. Overexpressed in a large number of tumors, in blood from patients with acute myelogenous leukemia (AML) and in chronic myelogenous leukemia (CML) blast crisis.

The protein localises to the nucleus. It is found in the cytoplasm. In terms of biological role, participates in MYC-mediated cell transformation and apoptosis; induces anchorage-independent growth and clonogenicity in lymphoblastoid cells. Insufficient to induce tumorigenicity when overexpressed but contributes to MYC-mediated tumorigenesis. May play a role as transcriptional regulator. This Homo sapiens (Human) protein is Cell division cycle-associated protein 7 (CDCA7).